The primary structure comprises 1803 residues: Pyruvate dehydrogenase [NADP(+)], mitochondrial (1803 aa).

A mitochondrion-targeting transit peptide spans 1 to 37 (MKQSVRPIISNVLRKEVALYSTIIGQDKGKEPTGRTY). 2 4Fe-4S ferredoxin-type domains span residues 747–776 (FIPQWIPANCTQCNYCSYVCPHATIRPFVL) and 802–831 (FRIQVAPEDCTGCQVCVETCPDDALEMTDA). [4Fe-4S] cluster contacts are provided by Cys-756, Cys-759, Cys-762, Cys-766, Cys-811, Cys-814, Cys-817, and Cys-821. Residues 1248–1391 (VTILYGSETG…GFNNWIPSVW (144 aa)) enclose the Flavodoxin-like domain. The FAD-binding FR-type domain maps to 1425–1650 (KSTPVLSITG…IHPTAMEFPD (226 aa)). FAD contacts are provided by residues 1458-1469 (YQVGDSLGVFPE) and 1585-1595 (IKPRYYSISSA).

The protein in the N-terminal section; belongs to the pyruvate:ferredoxin/flavodoxin oxidoreductase family. As to quaternary structure, homodimer. It depends on FAD as a cofactor. FMN serves as cofactor. Thiamine diphosphate is required as a cofactor. Requires iron-sulfur cluster as cofactor.

It localises to the mitochondrion. The enzyme catalyses pyruvate + NADP(+) + CoA = acetyl-CoA + CO2 + NADPH. In terms of biological role, pyruvate dehydrogenase [NADP(+)] is one of three enzymes participating in respiratory metabolism. The enzyme is also active with 2-oxobutyrate and oxaloacetate. The enzyme is oxygen sensitive. The protein is Pyruvate dehydrogenase [NADP(+)], mitochondrial (PNO) of Euglena gracilis.